A 332-amino-acid chain; its full sequence is Biotin synthase (332 aa).

The 231-residue stretch at 53-283 (WGKGGVHACS…VHPRKTIKFA (231 aa)) folds into the Radical SAM core domain. Residues C71, C75, and C78 each coordinate [4Fe-4S] cluster. 3 residues coordinate [2Fe-2S] cluster: C150, C211, and K281.

Belongs to the radical SAM superfamily. Biotin synthase family. As to quaternary structure, homodimer. [4Fe-4S] cluster is required as a cofactor. The cofactor is [2Fe-2S] cluster.

The enzyme catalyses (4R,5S)-dethiobiotin + (sulfur carrier)-SH + 2 reduced [2Fe-2S]-[ferredoxin] + 2 S-adenosyl-L-methionine = (sulfur carrier)-H + biotin + 2 5'-deoxyadenosine + 2 L-methionine + 2 oxidized [2Fe-2S]-[ferredoxin]. The protein operates within cofactor biosynthesis; biotin biosynthesis; biotin from 7,8-diaminononanoate: step 2/2. Functionally, catalyzes the conversion of dethiobiotin (DTB) to biotin by the insertion of a sulfur atom into dethiobiotin via a radical-based mechanism. This Chlorobium luteolum (strain DSM 273 / BCRC 81028 / 2530) (Pelodictyon luteolum) protein is Biotin synthase.